A 211-amino-acid chain; its full sequence is Large ribosomal subunit protein uL3 (211 aa).

The disordered stretch occupies residues 122 to 156 (NQKRNNFGRGPMSHGSKNHRAPGSIGAGTTPGRVY).

The protein belongs to the universal ribosomal protein uL3 family. As to quaternary structure, part of the 50S ribosomal subunit. Forms a cluster with proteins L14 and L19.

In terms of biological role, one of the primary rRNA binding proteins, it binds directly near the 3'-end of the 23S rRNA, where it nucleates assembly of the 50S subunit. In Nostoc sp. (strain PCC 7120 / SAG 25.82 / UTEX 2576), this protein is Large ribosomal subunit protein uL3.